The primary structure comprises 666 residues: DNA-directed RNA polymerase subunit beta' (666 aa).

Positions 69, 71, 87, and 90 each coordinate Zn(2+). Aspartate 489, aspartate 491, and aspartate 493 together coordinate Mg(2+).

The protein belongs to the RNA polymerase beta' chain family. RpoC1 subfamily. As to quaternary structure, in plastids the minimal PEP RNA polymerase catalytic core is composed of four subunits: alpha, beta, beta', and beta''. When a (nuclear-encoded) sigma factor is associated with the core the holoenzyme is formed, which can initiate transcription. Requires Mg(2+) as cofactor. It depends on Zn(2+) as a cofactor.

The protein localises to the plastid. It localises to the chloroplast. It carries out the reaction RNA(n) + a ribonucleoside 5'-triphosphate = RNA(n+1) + diphosphate. Its function is as follows. DNA-dependent RNA polymerase catalyzes the transcription of DNA into RNA using the four ribonucleoside triphosphates as substrates. In Chara vulgaris (Common stonewort), this protein is DNA-directed RNA polymerase subunit beta'.